Here is a 920-residue protein sequence, read N- to C-terminus: Isoleucine--tRNA ligase (920 aa).

Positions proline 58 to histidine 68 match the 'HIGH' region motif. An L-isoleucyl-5'-AMP-binding site is contributed by glutamate 569. The 'KMSKS' region motif lies at lysine 610–serine 614. Residue lysine 613 participates in ATP binding. Zn(2+) contacts are provided by cysteine 895, cysteine 898, cysteine 910, and cysteine 913.

This sequence belongs to the class-I aminoacyl-tRNA synthetase family. IleS type 1 subfamily. Monomer. Zn(2+) serves as cofactor.

It localises to the cytoplasm. It catalyses the reaction tRNA(Ile) + L-isoleucine + ATP = L-isoleucyl-tRNA(Ile) + AMP + diphosphate. Functionally, catalyzes the attachment of isoleucine to tRNA(Ile). As IleRS can inadvertently accommodate and process structurally similar amino acids such as valine, to avoid such errors it has two additional distinct tRNA(Ile)-dependent editing activities. One activity is designated as 'pretransfer' editing and involves the hydrolysis of activated Val-AMP. The other activity is designated 'posttransfer' editing and involves deacylation of mischarged Val-tRNA(Ile). In Helicobacter pylori (strain HPAG1), this protein is Isoleucine--tRNA ligase.